We begin with the raw amino-acid sequence, 198 residues long: Probable molybdenum cofactor guanylyltransferase (198 aa).

Residues 9–11 (LAG), K22, D66, and D95 each bind GTP. D95 provides a ligand contact to Mg(2+).

Belongs to the MobA family. The cofactor is Mg(2+).

It localises to the cytoplasm. The enzyme catalyses Mo-molybdopterin + GTP + H(+) = Mo-molybdopterin guanine dinucleotide + diphosphate. Transfers a GMP moiety from GTP to Mo-molybdopterin (Mo-MPT) cofactor (Moco or molybdenum cofactor) to form Mo-molybdopterin guanine dinucleotide (Mo-MGD) cofactor. The protein is Probable molybdenum cofactor guanylyltransferase of Clostridium perfringens (strain 13 / Type A).